Consider the following 397-residue polypeptide: Torsin-3A (397 aa).

The first 25 residues, 1–25 (MLRGPWRQLWLFFLLLLPGAPEPRG), serve as a signal peptide directing secretion. A glycan (N-linked (GlcNAc...) asparagine) is linked at Asn122. Residue 167-174 (GWSGTGKN) coordinates ATP.

The protein belongs to the ClpA/ClpB family. Torsin subfamily. In terms of assembly, may not form homohexamers. In terms of processing, N-glycosylated. Ubiquitously expressed. Highest expression in stomach, salivary glands and lymph nodes. Isoform 2 is expressed in placenta.

It localises to the cytoplasm. The protein localises to the endoplasmic reticulum lumen. This is Torsin-3A (TOR3A) from Homo sapiens (Human).